A 480-amino-acid chain; its full sequence is Cytochrome P450 monooxygenase ORF11 (480 aa).

A helical membrane pass occupies residues 9-29 (LLLLPHLSALTPKTGFLIGLA). N-linked (GlcNAc...) asparagine glycosylation is found at Asn-265 and Asn-352. Position 449 (Cys-449) interacts with heme.

The protein belongs to the cytochrome P450 family. Heme is required as a cofactor.

Its subcellular location is the membrane. It functions in the pathway sesquiterpene biosynthesis. Its function is as follows. Cytochrome P450 monooxygenase; part of the gene cluster that mediates the biosynthesis of PR-toxin, a bicyclic sesquiterpene belonging to the eremophilane class and acting as a mycotoxin. The first step of the pathway is catalyzed by the aristolochene synthase which performs the cyclization of trans,trans-farnesyl diphosphate (FPP) to the bicyclic sesquiterpene aristolochene. Following the formation of aristolochene, the non-oxygenated aristolochene is converted to the trioxygenated intermediate eremofortin B, via 7-epi-neopetasone. This conversion appears to involve three enzymes, a hydroxysterol oxidase-like enzyme, the quinone-oxidase prx3 that forms the quinone-type-structure in the bicyclic nucleus of aristolochene with the C8-oxo group and the C-3 hydroxyl group, and the P450 monooxygenase ORF6 that introduces the epoxide at the double bond between carbons 1 and 2. No monoxy or dioxy-intermediates have been reported to be released to the broth, so these three early oxidative reactions may be coupled together. Eremofortin B is further oxidized by another P450 monooxygenase, that introduces a second epoxide between carbons 7 and 11 prior to acetylation to eremofortin A by the acetyltransferase ORF8. The second epoxidation may be performed by a second P450 monooxygenase. After the acetylation step, eremofortin A is converted to eremofortin C and then to PR-toxin. First the conversion of eremofortin A to eremofortin C proceeds by oxidation of the side chain of the molecule at C-12 and is catalyzed by the short-chain oxidoreductase prx1. The cytochrome P450 monooxygenase ORF6 is probably also involved in this step. The primary alcohol formed at C-12 is finally oxidized by the short-chain alcohol dehydrogenase prx4 that forms PR-toxin. In Penicillium roqueforti (strain FM164), this protein is Cytochrome P450 monooxygenase ORF11.